We begin with the raw amino-acid sequence, 291 residues long: GCN5-related N-acetyltransferase 4, chloroplastic (291 aa).

The N-terminal 61 residues, 1–61 (MRSTPLGTTA…PSQINSGACN (61 aa)), are a transit peptide targeting the chloroplast. The 205-residue stretch at 76–280 (IVVREARLED…RFTFMMKLVN (205 aa)) folds into the N-acetyltransferase domain. Acetyl-CoA contacts are provided by residues 199–201 (VAV) and 207–212 (RKGIAK). An N6-acetyllysine modification is found at lysine 217. Acetyl-CoA is bound by residues 238–240 (NLG) and tyrosine 245. Tyrosine 245 (proton donor) is an active-site residue. 2 positions are modified to N6-acetyllysine: lysine 254 and lysine 265.

Belongs to the acetyltransferase family. GNAT subfamily. Oligomer. Post-translationally, autoacetylated at K-217, K-254 and K-265. In terms of tissue distribution, expressed in green tissues.

It localises to the plastid. The protein resides in the chloroplast. It carries out the reaction an N-terminal L-alpha-aminoacyl-[protein] + acetyl-CoA = N-terminal N(alpha)-acetyl-L-alpha-aminoacyl-[protein] + CoA + H(+). It catalyses the reaction L-lysyl-[protein] + acetyl-CoA = N(6)-acetyl-L-lysyl-[protein] + CoA + H(+). The catalysed reaction is N-terminal L-alanyl-[protein] + acetyl-CoA = N-terminal N(alpha)-acetyl-L-alanyl-[protein] + CoA + H(+). The enzyme catalyses N-terminal L-seryl-[protein] + acetyl-CoA = N-terminal N(alpha)-acetyl-L-seryl-[protein] + CoA + H(+). It carries out the reaction N-terminal L-threonyl-[protein] + acetyl-CoA = N-terminal N(alpha)-acetyl-L-threonyl-[protein] + CoA + H(+). It catalyses the reaction N-terminal L-methionyl-[protein] + acetyl-CoA = N-terminal N(alpha)-acetyl-L-methionyl-[protein] + CoA + H(+). The catalysed reaction is N-terminal L-valyl-[protein] + acetyl-CoA = N-terminal N(alpha)-acetyl-L-valyl-[protein] + CoA + H(+). The enzyme catalyses N-terminal glycyl-[protein] + acetyl-CoA = N-terminal N(alpha)-acetylglycyl-[protein] + CoA + H(+). Functionally, protein acetyltransferase with dual specificity triggering both N-alpha-acetylation (NTA), with a large spectrum of modified N-termini, including methionine, alanine, serine, threonine and to a lower extent glycine and valine as substrates, and epsilon-lysine acetylation (KA) of several plastid proteins. This chain is GCN5-related N-acetyltransferase 4, chloroplastic, found in Arabidopsis thaliana (Mouse-ear cress).